A 162-amino-acid chain; its full sequence is Probable cytosine deaminase (162 aa).

Residues 8–132 enclose the CMP/dCMP-type deaminase domain; it reads EKDLAYLREA…PLYINSRDIL (125 aa). Zn(2+) is bound at residue His-59. Glu-61 serves as the catalytic Proton donor. Positions 87 and 90 each coordinate Zn(2+). Residue Asp-159 coordinates substrate.

The protein belongs to the cytidine and deoxycytidylate deaminase family. In terms of assembly, homodimer. It depends on Zn(2+) as a cofactor.

The protein localises to the cytoplasm. It localises to the nucleus. The catalysed reaction is cytosine + H2O + H(+) = uracil + NH4(+). The protein operates within pyrimidine metabolism; UMP biosynthesis via salvage pathway; uracil from cytosine: step 1/1. Its function is as follows. Catalyzes the hydrolytic deamination of cytosine to uracil or 5-methylcytosine to thymine. Is involved in the pyrimidine salvage pathway, which allows the cell to utilize cytosine for pyrimidine nucleotide synthesis. The polypeptide is Probable cytosine deaminase (Schizosaccharomyces pombe (strain 972 / ATCC 24843) (Fission yeast)).